Consider the following 426-residue polypeptide: Divalent metal cation transporter MntH (426 aa).

10 consecutive transmembrane segments (helical) span residues 31-51, 58-78, 134-156, 169-189, 208-228, 256-276, 298-318, 337-357, 363-383, and 402-422; these read WYLL…GNVA, AQFG…AGLV, ILFR…LLLM, VITG…FVAT, SVLL…VYLH, VILA…VAAI, LGAT…LASA, IPML…LALG, ALVL…LPLV, and TVLG…LIYL.

This sequence belongs to the NRAMP family.

Its subcellular location is the cell membrane. Functionally, h(+)-stimulated, divalent metal cation uptake system. This chain is Divalent metal cation transporter MntH, found in Mycobacterium leprae (strain TN).